The primary structure comprises 147 residues: Hemoglobin subunit beta-2 (147 aa).

Position 2 is an N-acetylvaline (V2). The Globin domain maps to 3-147 (HLTDAEKSAV…VATALAHKYH (145 aa)). Residue K18 is modified to N6-succinyllysine. At Y42 the chain carries Phosphotyrosine. Phosphoserine is present on residues S45, S51, and S53. K60 bears the N6-succinyllysine mark. Heme b contacts are provided by H64 and H93. R105 carries the asymmetric dimethylarginine modification. Phosphothreonine is present on T124.

The protein belongs to the globin family. As to quaternary structure, heterotetramer of two alpha chains and two beta chains. Red blood cells.

In terms of biological role, involved in oxygen transport from the lung to the various peripheral tissues. The protein is Hemoglobin subunit beta-2 (Hbb-b2) of Mus musculus (Mouse).